The following is a 473-amino-acid chain: Sulfate adenylyltransferase subunit 1 (473 aa).

The tr-type G domain maps to 19–238; sequence KTLLKFLTCG…IKIKNSISSE (220 aa). Residues 28–35 form a G1 region; the sequence is GSVDDGKS. Residue 28-35 coordinates GTP; the sequence is GSVDDGKS. Residues 86–90 form a G2 region; the sequence is GITID. The segment at 107–110 is G3; it reads DTPG. GTP is bound by residues 107 to 111 and 162 to 165; these read DTPGH and NKMD. The segment at 162-165 is G4; that stretch reads NKMD. Residues 200–202 are G5; sequence SAL.

Belongs to the TRAFAC class translation factor GTPase superfamily. Classic translation factor GTPase family. CysN/NodQ subfamily. In terms of assembly, heterodimer composed of CysD, the smaller subunit, and CysN.

The catalysed reaction is sulfate + ATP + H(+) = adenosine 5'-phosphosulfate + diphosphate. Its pathway is sulfur metabolism; hydrogen sulfide biosynthesis; sulfite from sulfate: step 1/3. With CysD forms the ATP sulfurylase (ATPS) that catalyzes the adenylation of sulfate producing adenosine 5'-phosphosulfate (APS) and diphosphate, the first enzymatic step in sulfur assimilation pathway. APS synthesis involves the formation of a high-energy phosphoric-sulfuric acid anhydride bond driven by GTP hydrolysis by CysN coupled to ATP hydrolysis by CysD. The chain is Sulfate adenylyltransferase subunit 1 from Buchnera aphidicola subsp. Acyrthosiphon pisum (strain APS) (Acyrthosiphon pisum symbiotic bacterium).